The following is a 512-amino-acid chain: Protein arginine N-methyltransferase 2 (512 aa).

Residues 67–103 are disordered; the sequence is TSNIDDLPLPPPIQEVEEEEPTQQNIEQQQQTQDESD. A compositionally biased stretch (low complexity) spans 88-99; sequence TQQNIEQQQQTQ. One can recognise an SAM-dependent MTase PRMT-type domain in the interval 120-508; it reads DEEYFSSYSK…KTNPFDYSYQ (389 aa). Residues His133, Arg142, Gly166, and Glu217 each coordinate S-adenosyl-L-methionine. Catalysis depends on residues Glu231 and Glu240. Residues 375–395 are disordered; it reads DDDDNDNNNNNNDNSNDDENK.

It belongs to the class I-like SAM-binding methyltransferase superfamily. Protein arginine N-methyltransferase family.

It localises to the cytoplasm. The protein resides in the nucleus. The enzyme catalyses L-arginyl-[protein] + 2 S-adenosyl-L-methionine = N(omega),N(omega)-dimethyl-L-arginyl-[protein] + 2 S-adenosyl-L-homocysteine + 2 H(+). Functionally, arginine methyltransferase that methylates the guanidino nitrogens of arginyl residues in some proteins such as histones. In Dictyostelium discoideum (Social amoeba), this protein is Protein arginine N-methyltransferase 2 (prmt2).